Consider the following 226-residue polypeptide: Phosphoglycolate phosphatase (226 aa).

Asp-10 serves as the catalytic Nucleophile. Residues Asp-10, Asp-12, and Asp-175 each contribute to the Mg(2+) site.

It belongs to the HAD-like hydrolase superfamily. CbbY/CbbZ/Gph/YieH family. The cofactor is Mg(2+).

The catalysed reaction is 2-phosphoglycolate + H2O = glycolate + phosphate. Its pathway is organic acid metabolism; glycolate biosynthesis; glycolate from 2-phosphoglycolate: step 1/1. Specifically catalyzes the dephosphorylation of 2-phosphoglycolate. Is involved in the dissimilation of the intracellular 2-phosphoglycolate formed during the DNA repair of 3'-phosphoglycolate ends, a major class of DNA lesions induced by oxidative stress. This Vibrio cholerae serotype O1 (strain ATCC 39315 / El Tor Inaba N16961) protein is Phosphoglycolate phosphatase.